The chain runs to 305 residues: tRNA uridine(34) hydroxylase (305 aa).

In terms of domain architecture, Rhodanese spans 126–220 (CDPEVTVIDT…YLEEVPAQES (95 aa)). The Cysteine persulfide intermediate role is filled by C180.

This sequence belongs to the TrhO family.

The enzyme catalyses uridine(34) in tRNA + AH2 + O2 = 5-hydroxyuridine(34) in tRNA + A + H2O. Functionally, catalyzes oxygen-dependent 5-hydroxyuridine (ho5U) modification at position 34 in tRNAs. This Nostoc punctiforme (strain ATCC 29133 / PCC 73102) protein is tRNA uridine(34) hydroxylase.